Consider the following 159-residue polypeptide: Ribosomal RNA large subunit methyltransferase H (159 aa).

S-adenosyl-L-methionine-binding positions include L76, G108, and F127–L132.

The protein belongs to the RNA methyltransferase RlmH family. In terms of assembly, homodimer.

Its subcellular location is the cytoplasm. The catalysed reaction is pseudouridine(1915) in 23S rRNA + S-adenosyl-L-methionine = N(3)-methylpseudouridine(1915) in 23S rRNA + S-adenosyl-L-homocysteine + H(+). In terms of biological role, specifically methylates the pseudouridine at position 1915 (m3Psi1915) in 23S rRNA. The sequence is that of Ribosomal RNA large subunit methyltransferase H from Bacillus cereus (strain ATCC 10987 / NRS 248).